Here is a 295-residue protein sequence, read N- to C-terminus: Aspartate carbamoyltransferase catalytic subunit (295 aa).

Carbamoyl phosphate-binding residues include Arg-54 and Thr-55. Lys-82 serves as a coordination point for L-aspartate. Carbamoyl phosphate contacts are provided by Arg-104, His-132, and Gln-135. Positions 165 and 218 each coordinate L-aspartate. Gly-257 and Pro-258 together coordinate carbamoyl phosphate.

It belongs to the aspartate/ornithine carbamoyltransferase superfamily. ATCase family. As to quaternary structure, heterododecamer (2C3:3R2) of six catalytic PyrB chains organized as two trimers (C3), and six regulatory PyrI chains organized as three dimers (R2).

It carries out the reaction carbamoyl phosphate + L-aspartate = N-carbamoyl-L-aspartate + phosphate + H(+). It functions in the pathway pyrimidine metabolism; UMP biosynthesis via de novo pathway; (S)-dihydroorotate from bicarbonate: step 2/3. In terms of biological role, catalyzes the condensation of carbamoyl phosphate and aspartate to form carbamoyl aspartate and inorganic phosphate, the committed step in the de novo pyrimidine nucleotide biosynthesis pathway. This chain is Aspartate carbamoyltransferase catalytic subunit, found in Wolbachia pipientis wMel.